We begin with the raw amino-acid sequence, 479 residues long: Cysteine protease effector 1 (479 aa).

This chain is Cysteine protease effector 1, found in Escherichia coli O1:K1:H7 (strain ATCC 11775 / DSM 30083 / JCM 1649 / NBRC 102203 / NCTC 9001 / U5/41).